A 61-amino-acid chain; its full sequence is UPF0434 protein Nmul_A1027 (61 aa).

Belongs to the UPF0434 family.

This is UPF0434 protein Nmul_A1027 from Nitrosospira multiformis (strain ATCC 25196 / NCIMB 11849 / C 71).